Here is an 88-residue protein sequence, read N- to C-terminus: Small ribosomal subunit protein bS20 (88 aa).

2 disordered regions span residues 1-29 (MANT…SKLR) and 69-88 (KNTA…AMAA).

The protein belongs to the bacterial ribosomal protein bS20 family.

Functionally, binds directly to 16S ribosomal RNA. The sequence is that of Small ribosomal subunit protein bS20 from Polynucleobacter asymbioticus (strain DSM 18221 / CIP 109841 / QLW-P1DMWA-1) (Polynucleobacter necessarius subsp. asymbioticus).